We begin with the raw amino-acid sequence, 3925 residues long: Polyketide synthase ThaH (3925 aa).

The disordered stretch occupies residues 1 to 56 (MPRWRPTWLKRLSCPKQPRHPTHPKHPTHPKHPKHPKHPRHPKHPRISRRCSSASA). The segment covering 17-49 (QPRHPTHPKHPTHPKHPKHPKHPRHPKHPRISR) has biased composition (basic residues). Residues 1073-1148 (GLVGGLEGEV…DIAGYIASAE (76 aa)) form the Carrier 1 domain. Position 1108 is an O-(pantetheine 4'-phosphoryl)serine (serine 1108). Positions 1166–1182 (AAVATPPGRPAGEAAGA) are enriched in low complexity. Residues 1166–1233 (AAVATPPGRP…GEPARAASHG (68 aa)) are disordered. Positions 1183–1196 (QRDRAPRAADERAD) are enriched in basic and acidic residues. The span at 1202–1216 (PSDAHASKAAAIDSR) shows a compositional bias: low complexity. A Ketosynthase family 3 (KS3) 1 domain is found at 1237 to 1667 (ADGLAIIGIA…GTNAHALVEA (431 aa)). Active-site for beta-ketoacyl synthase 1 activity residues include cysteine 1413, histidine 1549, and histidine 1589. A disordered region spans residues 1679-1698 (GATGAPDVPDAPDAPDAPDA). The interval 1844-1969 (HPLLHRNVST…GHVQRIAEPA (126 aa)) is N-terminal hotdog fold. The region spanning 1844-2143 (HPLLHRNVST…ARRFVREPAR (300 aa)) is the PKS/mFAS DH domain. Histidine 1873 acts as the Proton acceptor; for dehydratase activity in catalysis. The segment at 1983–2143 (AAPRLSAARC…ARRFVREPAR (161 aa)) is C-terminal hotdog fold. Aspartate 2043 serves as the catalytic Proton donor; for dehydratase activity. 2 stretches are compositionally biased toward low complexity: residues 2594 to 2607 (DDPA…AASS) and 2632 to 2646 (PAAA…ASDA). Disordered regions lie at residues 2594–2613 (DDPA…LPEM) and 2619–2657 (APAD…AAPA). Residues 2664-2737 (EHALALLKRL…ELACYFVAHH (74 aa)) enclose the Carrier 2 domain. Residue serine 2698 is modified to O-(pantetheine 4'-phosphoryl)serine. The span at 2753-2768 (LAPAPAQPLAPRAPSA) shows a compositional bias: low complexity. The tract at residues 2753–2841 (LAPAPAQPLA…AHAPAQASAP (89 aa)) is disordered. Residues 2770-2779 (PARDAARSLE) show a composition bias toward basic and acidic residues. 2 stretches are compositionally biased toward low complexity: residues 2789 to 2813 (GQEP…QASA) and 2823 to 2841 (ETRT…ASAP). Positions 2847–3286 (AFDIAIVGLA…GSNAHLIVEE (440 aa)) constitute a Ketosynthase family 3 (KS3) 2 domain. Residues cysteine 3022, histidine 3157, and histidine 3197 each act as for beta-ketoacyl synthase 2 activity in the active site. Low complexity-rich tracts occupy residues 3512–3524 (ASTA…PSPA) and 3578–3592 (AAAA…SSPS). Disordered stretches follow at residues 3512-3531 (ASTA…STGE) and 3578-3619 (AAAA…AAPD). Pro residues predominate over residues 3593-3603 (PSSPSPLPSSP). Over residues 3604 to 3619 (PRMSSRQHASPAAAPD) the composition is skewed to low complexity. Positions 3622–3699 (AALLDIEAFL…AMARHVSSNA (78 aa)) constitute a Carrier 3 domain. Serine 3659 carries the O-(pantetheine 4'-phosphoryl)serine modification. Residues 3734–3754 (PAPFASAAPPEPPASPARADG) are disordered. One can recognise a Carrier 4 domain in the interval 3762-3839 (TSLDAIRAHL…ALARFVGTQL (78 aa)). Position 3799 is an O-(pantetheine 4'-phosphoryl)serine (serine 3799).

The protein belongs to the ATP-dependent AMP-binding enzyme family. Pantetheine 4'-phosphate serves as cofactor.

It is found in the cytoplasm. It participates in antibiotic biosynthesis. Involved in production of the polyketide antibiotic thailandamide. This Burkholderia thailandensis (strain ATCC 700388 / DSM 13276 / CCUG 48851 / CIP 106301 / E264) protein is Polyketide synthase ThaH.